We begin with the raw amino-acid sequence, 335 residues long: NADH-quinone oxidoreductase subunit H (335 aa).

8 consecutive transmembrane segments (helical) span residues 11 to 31, 81 to 101, 114 to 134, 154 to 174, 187 to 207, 238 to 258, 270 to 290, and 307 to 327; these read VILT…CGAL, VIFT…FVVI, IGLL…LFAG, VSYE…VGSF, LWFI…GVAV, FFVG…TLFF, QLSF…FILL, and WKFC…IVLY.

The protein belongs to the complex I subunit 1 family. NDH-1 is composed of 13 different subunits. Subunits NuoA, H, J, K, L, M, N constitute the membrane sector of the complex.

The protein localises to the cell inner membrane. It carries out the reaction a quinone + NADH + 5 H(+)(in) = a quinol + NAD(+) + 4 H(+)(out). NDH-1 shuttles electrons from NADH, via FMN and iron-sulfur (Fe-S) centers, to quinones in the respiratory chain. The immediate electron acceptor for the enzyme in this species is believed to be ubiquinone. Couples the redox reaction to proton translocation (for every two electrons transferred, four hydrogen ions are translocated across the cytoplasmic membrane), and thus conserves the redox energy in a proton gradient. This subunit may bind ubiquinone. This chain is NADH-quinone oxidoreductase subunit H, found in Pseudomonas putida (strain ATCC 700007 / DSM 6899 / JCM 31910 / BCRC 17059 / LMG 24140 / F1).